The primary structure comprises 299 residues: Ankyrin repeat domain-containing protein 54 (299 aa).

The interval 1–27 (MAATGGGAEDESRSGRSSSEGECAVAP) is disordered. Residue alanine 2 is modified to N-acetylalanine. Phosphoserine is present on serine 62. The short motif at 98-116 (RRLGPTGKEVHALKRLRDS) is the Nuclear localization signal (NLS) element. ANK repeat units lie at residues 108–137 (HALKRLRDSANANDIETVQQLLEDGADPCA), 141–170 (KGRTALHFASCNGNDQIVQLLLDHGADPNQ), 174–203 (LGNTPLHLAACTNHVPVITTLLRGGARVDA), and 207–239 (AGRTPLHLAKSKLNILQEGHSQCLEAVRLEVKQ). The segment at 140–240 (DKGRTALHFA…EAVRLEVKQI (101 aa)) is LYN-binding. The short motif at 282 to 292 (LLASFTSLSLQ) is the Nuclear export signal (NES) element.

Interacts (via ankyrin repeat region) with LYN (via SH3-domain) in an activation-independent status of LYN. Forms a multiprotein complex with LYN and HCLS1. Interacts with TSN2, VAV1, DBNL and LASP1.

Its subcellular location is the nucleus. The protein localises to the cytoplasm. It localises to the midbody. Its function is as follows. Plays an important role in regulating intracellular signaling events associated with erythroid terminal differentiation. This Rattus norvegicus (Rat) protein is Ankyrin repeat domain-containing protein 54 (Ankrd54).